The sequence spans 198 residues: Probable chorismate pyruvate-lyase (198 aa).

The substrate site is built by R76, L114, and E172.

It belongs to the UbiC family.

Its subcellular location is the cytoplasm. The enzyme catalyses chorismate = 4-hydroxybenzoate + pyruvate. Its pathway is cofactor biosynthesis; ubiquinone biosynthesis. Its function is as follows. Removes the pyruvyl group from chorismate, with concomitant aromatization of the ring, to provide 4-hydroxybenzoate (4HB) for the ubiquinone pathway. The polypeptide is Probable chorismate pyruvate-lyase (Bordetella avium (strain 197N)).